The primary structure comprises 311 residues: CAAX prenyl protease 2 (311 aa).

3 helical membrane passes run 14-34, 51-71, and 94-114; these read VATC…PTVI, FICA…ILPI, and VVYP…LKLF. Catalysis depends on glutamate 164, which acts as the Proton donor/acceptor. A helical membrane pass occupies residues 173-193; sequence IPLLLCAGFRINTAIFLCPVL. Histidine 198 serves as the catalytic Proton donor/acceptor. A run of 3 helical transmembrane segments spans residues 219–239, 244–264, and 268–288; these read IVGL…FLFI, LAAP…VLYA, and GLVS…LFPL.

This sequence belongs to the peptidase U48 family. Expressed in seeds, stems, leaves, flowers and siliques.

Its subcellular location is the endoplasmic reticulum membrane. It catalyses the reaction Hydrolyzes the peptide bond -P2-(S-farnesyl or geranylgeranyl)C-P1'-P2'-P3'-COOH where P1' and P2' are amino acids with aliphatic sidechains and P3' is any C-terminal residue.. Inhibited in vitro by L-1-tosylamido-2-phenylethyl chloromethyl ketone (TPCK) and N-ethylmaleimide, but not by EDTA. Its function is as follows. Protease involved in the processing of a variety of prenylated proteins containing the C-terminal CAAX motif, where C is a cysteine modified with an isoprenoid lipid, A is an aliphatic amino acid and X is any C-terminal amino acid. Proteolytically removes the C-terminal three residues of farnesylated and geranylated proteins, leaving the prenylated cysteine as the new C-terminus. The substrate specificity is only partially overlapping with that of FACE1. CAAX processing is likely required for subcellular targeting of prenylated proteins to the plasma membrane. The chain is CAAX prenyl protease 2 (FACE2) from Arabidopsis thaliana (Mouse-ear cress).